Consider the following 71-residue polypeptide: Protein SlyX homolog (71 aa).

Residues 49 to 71 are disordered; the sequence is KIKESQSSSSMMSNEPEPPPPHY.

The protein belongs to the SlyX family.

The sequence is that of Protein SlyX homolog from Pseudoalteromonas translucida (strain TAC 125).